The chain runs to 269 residues: GTP cyclohydrolase FolE2 1 (269 aa).

Belongs to the GTP cyclohydrolase IV family.

It carries out the reaction GTP + H2O = 7,8-dihydroneopterin 3'-triphosphate + formate + H(+). It functions in the pathway cofactor biosynthesis; 7,8-dihydroneopterin triphosphate biosynthesis; 7,8-dihydroneopterin triphosphate from GTP: step 1/1. In terms of biological role, converts GTP to 7,8-dihydroneopterin triphosphate. The protein is GTP cyclohydrolase FolE2 1 of Burkholderia cenocepacia (strain HI2424).